The following is a 478-amino-acid chain: Kynurenine 3-monooxygenase (478 aa).

FAD is bound by residues V19, 37–40, and A57; that span reads YEAR. L-kynurenine-binding residues include R85 and Y99. Residues R111, L136, T172, D304, and 317 to 318 each bind FAD; that span reads MN. Residues N363 and Y398 each contribute to the L-kynurenine site. 2 helical membrane passes run 385 to 404 and 425 to 445; these read FLHA…VAFT and GLFV…VHHL.

It belongs to the aromatic-ring hydroxylase family. KMO subfamily. It depends on FAD as a cofactor. In terms of tissue distribution, highest activity in liver and kidney. Low activity in spleen, stomach, intestinal tract, esophagus, heart and lung.

It is found in the mitochondrion outer membrane. It catalyses the reaction L-kynurenine + NADPH + O2 + H(+) = 3-hydroxy-L-kynurenine + NADP(+) + H2O. Its pathway is cofactor biosynthesis; NAD(+) biosynthesis; quinolinate from L-kynurenine: step 1/3. Its function is as follows. Catalyzes the hydroxylation of L-kynurenine (L-Kyn) to form 3-hydroxy-L-kynurenine (L-3OHKyn). Required for synthesis of quinolinic acid, a neurotoxic NMDA receptor antagonist and potential endogenous inhibitor of NMDA receptor signaling in axonal targeting, synaptogenesis and apoptosis during brain development. Quinolinic acid may also affect NMDA receptor signaling in pancreatic beta cells, osteoblasts, myocardial cells, and the gastrointestinal tract. This chain is Kynurenine 3-monooxygenase, found in Rattus norvegicus (Rat).